The following is a 386-amino-acid chain: 17-hydroxy-3-oxo-4-pregnene-20-carboxyl-CoA lyase (386 aa).

Y292 (proton acceptor) is an active-site residue. Residue Y342 is the Proton donor of the active site.

The protein belongs to the thiolase-like superfamily. In terms of assembly, homodimer. Interacts with the ChsH1/ChsH2 hydratase via the DUF35 C-terminal region of ChsH2 (ChsH2-DUF35). The ChsH1-ChsH2-Ltp2 protein complex is composed of two protomers that form a heterohexameric structure through the Ltp2 dimerization interface.

The catalysed reaction is 17-hydroxy-3-oxochol-4-en-22-oyl-CoA = androst-4-ene-3,17-dione + propanoyl-CoA. Its pathway is steroid metabolism; cholesterol degradation. Involved in cholesterol side chain degradation. When associated with the ChsH1/ChsH2 hydratase, catalyzes the retroaldol cleavage of 17-hydroxy-3-oxo-4-pregnene-20-carboxyl-CoA (17-HOPC-CoA) produced by the hydratase, forming androst-4-ene-3,17-dione and propionyl-CoA. This Mycobacterium tuberculosis (strain ATCC 25618 / H37Rv) protein is 17-hydroxy-3-oxo-4-pregnene-20-carboxyl-CoA lyase.